A 369-amino-acid chain; its full sequence is Mitogen-activated protein kinase 5 (369 aa).

Residues 36-322 (QPPIMPIGRG…VEEALDHPYL (287 aa)) enclose the Protein kinase domain. ATP is bound by residues 42–50 (IGRGAYGIV) and K65. D162 functions as the Proton acceptor in the catalytic mechanism. Residue T194 is modified to Phosphothreonine. A TXY motif is present at residues 194-196 (TEY). Y196 carries the phosphotyrosine modification.

It belongs to the protein kinase superfamily. CMGC Ser/Thr protein kinase family. MAP kinase subfamily. As to quaternary structure, interacts with MKK1. Post-translationally, dually phosphorylated on Thr-194 and Tyr-196, which activates the enzyme.

It catalyses the reaction L-seryl-[protein] + ATP = O-phospho-L-seryl-[protein] + ADP + H(+). The catalysed reaction is L-threonyl-[protein] + ATP = O-phospho-L-threonyl-[protein] + ADP + H(+). Its activity is regulated as follows. Activated by threonine and tyrosine phosphorylation. Involved in disease resistance and abiotic stress tolerance signaling pathways. The protein is Mitogen-activated protein kinase 5 (MPK5) of Oryza sativa subsp. indica (Rice).